The primary structure comprises 238 residues: Inactive glycoside hydrolase XLP1 (238 aa).

The N-terminal stretch at 1–19 (MKSFLIAIVIAVLLPVSAA) is a signal peptide. The active site involves E133. N171 and N187 each carry an N-linked (GlcNAc...) asparagine glycan. E219 is a catalytic residue.

This sequence belongs to the glycosyl hydrolase 12 (cellulase H) family. In terms of assembly, interacts with host apoplastic glucanase inhibitor GIP2.

It is found in the secreted. Its function is as follows. Non-functional secreted XEG1-like protein that binds to host Nicotiana benthamiana apoplastic glucanase inhibitor protein GIP2 more tightly than does XEG1, thus it outcompetes XEG1 for GIP2 binding and frees functional XEG1 to support P.parasitica infection. With XEG1, is required to elevate apoplastic sugar during P.parasitica infection. In Phytophthora nicotianae (strain INRA-310) (Phytophthora parasitica), this protein is Inactive glycoside hydrolase XLP1.